A 619-amino-acid chain; its full sequence is Thiohydroximate-O-sulfate sulfur/sulfate-lyase (nitrile-forming) NSP4 (619 aa).

2 Jacalin-type lectin domains span residues 2 to 142 (AQKV…YFAP) and 151 to 292 (AKKL…YISL). Kelch repeat units follow at residues 326–374 (KIYS…VCMV), 379–425 (TLYV…SMAA), 429–478 (NVYV…VVQG), 480–524 (VWVV…ASAA), and 528–583 (HIVI…GWTA). R386 acts as the Proton donor in catalysis. Residues R386, S419, R441, G470, and V519 each coordinate a (Z)-N-(sulfonatooxy)alkanimidothioate. The active-site Proton donor is R441. Fe(2+) contacts are provided by E535, D539, and H543. Position 581 (W581) interacts with a (Z)-N-(sulfonatooxy)alkanimidothioate.

Belongs to the jacalin lectin family. It depends on Fe(2+) as a cofactor. As to expression, mainly expressed in roots, and, to a lower extent, in seedlings and leaves. Observed in seeds.

It carries out the reaction a (Z)-N-(sulfonatooxy)alkanimidothioate = a nitrile + sulfur + sulfate. The enzyme catalyses (Z)-phenyl-N-(sulfonatooxy)methanimidothioate = phenylacetonitrile + sulfur + sulfate. It catalyses the reaction (Z)-N-(sulfonatooxy)prop-2-enimidothioate = but-3-enenitrile + sulfur + sulfate. Specifier protein that contributes to constitutive and herbivore-induced simple nitrile formation. Promotes simple nitriles, but not epithionitrile or thiocyanate formation. Converts allylglucosinolate and benzylglucosinolate (glucotropaeolin) to their corresponding simple nitriles in the presence of myrosinase. This chain is Thiohydroximate-O-sulfate sulfur/sulfate-lyase (nitrile-forming) NSP4, found in Arabidopsis thaliana (Mouse-ear cress).